Here is a 361-residue protein sequence, read N- to C-terminus: RLA class I histocompatibility antigen, alpha chain 11/11 (361 aa).

The N-terminal stretch at Met-1 to Ala-24 is a signal peptide. Residues Gly-25–Ala-114 are alpha-1. The Extracellular segment spans residues Gly-25–Ile-308. Asn-110 carries N-linked (GlcNAc...) asparagine glycosylation. The segment at Gly-115–Ala-206 is alpha-2. 2 disulfide bridges follow: Cys-125/Cys-188 and Cys-227/Cys-283. Residues Asp-207–Trp-298 are alpha-3. Residues Pro-209 to Thr-297 enclose the Ig-like C1-type domain. The interval Glu-299–Ile-308 is connecting peptide. A helical membrane pass occupies residues Val-309 to Val-329. Over Arg-330–Pro-361 the chain is Cytoplasmic. Residues Ser-335–Pro-361 form a disordered region. A phosphoserine mark is found at Ser-355 and Ser-358.

This sequence belongs to the MHC class I family. As to quaternary structure, heterodimer of an alpha chain and a beta chain (beta-2-microglobulin).

The protein localises to the membrane. Involved in the presentation of foreign antigens to the immune system. The polypeptide is RLA class I histocompatibility antigen, alpha chain 11/11 (Oryctolagus cuniculus (Rabbit)).